Here is a 410-residue protein sequence, read N- to C-terminus: Multifunctional CCA protein (410 aa).

Residues Gly-8 and Arg-11 each coordinate ATP. Residues Gly-8 and Arg-11 each contribute to the CTP site. Positions 21 and 23 each coordinate Mg(2+). ATP-binding residues include Arg-91, Arg-137, and Arg-140. CTP is bound by residues Arg-91, Arg-137, and Arg-140. One can recognise an HD domain in the interval 228 to 329 (TLLHQFLCLK…WKLFKSLDIL (102 aa)).

Belongs to the tRNA nucleotidyltransferase/poly(A) polymerase family. Bacterial CCA-adding enzyme type 1 subfamily. As to quaternary structure, monomer. Can also form homodimers and oligomers. The cofactor is Mg(2+). Requires Ni(2+) as cofactor.

The catalysed reaction is a tRNA precursor + 2 CTP + ATP = a tRNA with a 3' CCA end + 3 diphosphate. The enzyme catalyses a tRNA with a 3' CCA end + 2 CTP + ATP = a tRNA with a 3' CCACCA end + 3 diphosphate. Functionally, catalyzes the addition and repair of the essential 3'-terminal CCA sequence in tRNAs without using a nucleic acid template. Adds these three nucleotides in the order of C, C, and A to the tRNA nucleotide-73, using CTP and ATP as substrates and producing inorganic pyrophosphate. tRNA 3'-terminal CCA addition is required both for tRNA processing and repair. Also involved in tRNA surveillance by mediating tandem CCA addition to generate a CCACCA at the 3' terminus of unstable tRNAs. While stable tRNAs receive only 3'-terminal CCA, unstable tRNAs are marked with CCACCA and rapidly degraded. The polypeptide is Multifunctional CCA protein (Alcanivorax borkumensis (strain ATCC 700651 / DSM 11573 / NCIMB 13689 / SK2)).